Here is a 142-residue protein sequence, read N- to C-terminus: Aspartate 1-decarboxylase (142 aa).

Serine 25 (schiff-base intermediate with substrate; via pyruvic acid) is an active-site residue. Position 25 is a pyruvic acid (Ser) (serine 25). Threonine 57 serves as a coordination point for substrate. The active-site Proton donor is the tyrosine 58. 73–75 (GAA) lines the substrate pocket.

Belongs to the PanD family. Heterooctamer of four alpha and four beta subunits. Requires pyruvate as cofactor. Post-translationally, is synthesized initially as an inactive proenzyme, which is activated by self-cleavage at a specific serine bond to produce a beta-subunit with a hydroxyl group at its C-terminus and an alpha-subunit with a pyruvoyl group at its N-terminus.

It is found in the cytoplasm. The catalysed reaction is L-aspartate + H(+) = beta-alanine + CO2. It participates in cofactor biosynthesis; (R)-pantothenate biosynthesis; beta-alanine from L-aspartate: step 1/1. Its function is as follows. Catalyzes the pyruvoyl-dependent decarboxylation of aspartate to produce beta-alanine. The chain is Aspartate 1-decarboxylase from Mycobacterium leprae (strain Br4923).